Here is a 173-residue protein sequence, read N- to C-terminus: Ribosome maturation factor RimM (173 aa).

Positions 98 to 170 constitute a PRC barrel domain; the sequence is EDEYYWCDLI…RMLITPLEGL (73 aa).

Belongs to the RimM family. Binds ribosomal protein uS19.

It localises to the cytoplasm. An accessory protein needed during the final step in the assembly of 30S ribosomal subunit, possibly for assembly of the head region. Essential for efficient processing of 16S rRNA. May be needed both before and after RbfA during the maturation of 16S rRNA. It has affinity for free ribosomal 30S subunits but not for 70S ribosomes. The chain is Ribosome maturation factor RimM from Pelobacter propionicus (strain DSM 2379 / NBRC 103807 / OttBd1).